Reading from the N-terminus, the 298-residue chain is Probable 2-(5''-triphosphoribosyl)-3'-dephosphocoenzyme-A synthase 2 (298 aa).

Belongs to the CitG/MdcB family.

The enzyme catalyses 3'-dephospho-CoA + ATP = 2'-(5''-triphospho-alpha-D-ribosyl)-3'-dephospho-CoA + adenine. The polypeptide is Probable 2-(5''-triphosphoribosyl)-3'-dephosphocoenzyme-A synthase 2 (Salmonella paratyphi A (strain ATCC 9150 / SARB42)).